A 273-amino-acid polypeptide reads, in one-letter code: 3-methyl-2-oxobutanoate hydroxymethyltransferase (273 aa).

Residues D49 and D88 each coordinate Mg(2+). 3-methyl-2-oxobutanoate-binding positions include 49–50 (DS), D88, and K118. Mg(2+) is bound at residue E120. The active-site Proton acceptor is the E187.

Belongs to the PanB family. In terms of assembly, homodecamer; pentamer of dimers. Mg(2+) is required as a cofactor.

It is found in the cytoplasm. The enzyme catalyses 3-methyl-2-oxobutanoate + (6R)-5,10-methylene-5,6,7,8-tetrahydrofolate + H2O = 2-dehydropantoate + (6S)-5,6,7,8-tetrahydrofolate. Its pathway is cofactor biosynthesis; (R)-pantothenate biosynthesis; (R)-pantoate from 3-methyl-2-oxobutanoate: step 1/2. Catalyzes the reversible reaction in which hydroxymethyl group from 5,10-methylenetetrahydrofolate is transferred onto alpha-ketoisovalerate to form ketopantoate. This Sinorhizobium medicae (strain WSM419) (Ensifer medicae) protein is 3-methyl-2-oxobutanoate hydroxymethyltransferase.